The primary structure comprises 280 residues: uncharacterized protein (280 aa).

Disordered stretches follow at residues 1-124 (MPRD…QREA) and 177-280 (LEEE…LSSK). Composition is skewed to basic residues over residues 16–36 (SRRR…RSRR) and 48–83 (YSRR…RQKS). Basic and acidic residues-rich tracts occupy residues 102–124 (AKNR…QREA) and 182–259 (EASL…ERLK).

This is an uncharacterized protein from Arabidopsis thaliana (Mouse-ear cress).